The sequence spans 333 residues: Isoaspartyl peptidase/L-asparaginase (333 aa).

Thr191 serves as the catalytic Nucleophile. Residues 219–222 (RVGD) and 242–245 (TGHG) each bind substrate.

The protein belongs to the Ntn-hydrolase family. As to quaternary structure, heterodimer of an alpha and beta chain produced by autocleavage. This heterodimer may then dimerize in turn, giving rise to a heterotetramer. Cleaved into an alpha and beta chain by autocatalysis; this activates the enzyme. The N-terminal residue of the beta subunit is responsible for the nucleophile hydrolase activity. In terms of tissue distribution, present in testis, brain, liver, kidney, heart and skeletal muscle. In brain, specifically present in the astrocytic lineage. Present in sperm (at protein level).

It localises to the cytoplasm. The catalysed reaction is L-asparagine + H2O = L-aspartate + NH4(+). It catalyses the reaction Cleavage of a beta-linked Asp residue from the N-terminus of a polypeptide.. Functionally, has both L-asparaginase and beta-aspartyl peptidase activity. Is highly active with L-Asp beta-methyl ester. Besides, has catalytic activity toward beta-aspartyl dipeptides and their methyl esters, including beta-L-Asp-L-Phe, beta-L-Asp-L-Phe methyl ester (aspartame), beta-L-Asp-L-Ala, beta-L-Asp-L-Leu and beta-L-Asp-L-Lys. Does not have aspartylglucosaminidase activity and is inactive toward GlcNAc-L-Asn. Likewise, has no activity toward glutamine. May be involved in the production of L-aspartate, which can act as an excitatory neurotransmitter in some brain regions. The polypeptide is Isoaspartyl peptidase/L-asparaginase (Asrgl1) (Rattus norvegicus (Rat)).